The sequence spans 433 residues: tRNA-2-methylthio-N(6)-dimethylallyladenosine synthase (433 aa).

Residues 3-118 (KKLFIQTLGC…ISTAVKTPKF (116 aa)) enclose the MTTase N-terminal domain. Residues Cys12, Cys49, Cys81, Cys150, Cys154, and Cys157 each coordinate [4Fe-4S] cluster. Residues 136 to 369 (RGSPYKSHIN…QSRHNEILDE (234 aa)) enclose the Radical SAM core domain. Positions 372 to 433 (AAQEGKILDV…RMVLYGELAN (62 aa)) constitute a TRAM domain.

This sequence belongs to the methylthiotransferase family. MiaB subfamily. Monomer. Requires [4Fe-4S] cluster as cofactor.

The protein resides in the cytoplasm. The catalysed reaction is N(6)-dimethylallyladenosine(37) in tRNA + (sulfur carrier)-SH + AH2 + 2 S-adenosyl-L-methionine = 2-methylsulfanyl-N(6)-dimethylallyladenosine(37) in tRNA + (sulfur carrier)-H + 5'-deoxyadenosine + L-methionine + A + S-adenosyl-L-homocysteine + 2 H(+). Its function is as follows. Catalyzes the methylthiolation of N6-(dimethylallyl)adenosine (i(6)A), leading to the formation of 2-methylthio-N6-(dimethylallyl)adenosine (ms(2)i(6)A) at position 37 in tRNAs that read codons beginning with uridine. This Campylobacter curvus (strain 525.92) protein is tRNA-2-methylthio-N(6)-dimethylallyladenosine synthase.